A 1103-amino-acid polypeptide reads, in one-letter code: Mediator of RNA polymerase II transcription subunit 14 (1103 aa).

3 disordered regions span residues 1–63 (MPGV…GYKQ), 120–140 (VPPQDSGPLPGAPNGKPLGNQ), and 1054–1103 (LETK…ITID). The span at 1073-1103 (SGNTVQNARLENKSPQKAAATHSNADVITID) shows a compositional bias: polar residues.

It belongs to the Mediator complex subunit 14 family. In terms of assembly, component of the Mediator complex.

It localises to the nucleus. Its function is as follows. Component of the Mediator complex, a coactivator involved in the regulated transcription of nearly all RNA polymerase II-dependent genes. Mediator functions as a bridge to convey information from gene-specific regulatory proteins to the basal RNA polymerase II transcription machinery. Mediator is recruited to promoters by direct interactions with regulatory proteins and serves as a scaffold for the assembly of a functional preinitiation complex with RNA polymerase II and the general transcription factors. The sequence is that of Mediator of RNA polymerase II transcription subunit 14 (rgr1) from Aspergillus terreus (strain NIH 2624 / FGSC A1156).